The primary structure comprises 248 residues: PF03932 family protein CutC (248 aa).

It belongs to the CutC family. In terms of assembly, homodimer.

The protein localises to the cytoplasm. In Salmonella paratyphi B (strain ATCC BAA-1250 / SPB7), this protein is PF03932 family protein CutC.